A 350-amino-acid polypeptide reads, in one-letter code: UDP-N-acetylglucosamine--N-acetylmuramyl-(pentapeptide) pyrophosphoryl-undecaprenol N-acetylglucosamine transferase (350 aa).

UDP-N-acetyl-alpha-D-glucosamine-binding positions include 9–11 (TGG), Asn-123, Arg-159, Ser-181, and Gln-281.

It belongs to the glycosyltransferase 28 family. MurG subfamily.

The protein resides in the cell inner membrane. The catalysed reaction is di-trans,octa-cis-undecaprenyl diphospho-N-acetyl-alpha-D-muramoyl-L-alanyl-D-glutamyl-meso-2,6-diaminopimeloyl-D-alanyl-D-alanine + UDP-N-acetyl-alpha-D-glucosamine = di-trans,octa-cis-undecaprenyl diphospho-[N-acetyl-alpha-D-glucosaminyl-(1-&gt;4)]-N-acetyl-alpha-D-muramoyl-L-alanyl-D-glutamyl-meso-2,6-diaminopimeloyl-D-alanyl-D-alanine + UDP + H(+). It functions in the pathway cell wall biogenesis; peptidoglycan biosynthesis. Functionally, cell wall formation. Catalyzes the transfer of a GlcNAc subunit on undecaprenyl-pyrophosphoryl-MurNAc-pentapeptide (lipid intermediate I) to form undecaprenyl-pyrophosphoryl-MurNAc-(pentapeptide)GlcNAc (lipid intermediate II). This Helicobacter hepaticus (strain ATCC 51449 / 3B1) protein is UDP-N-acetylglucosamine--N-acetylmuramyl-(pentapeptide) pyrophosphoryl-undecaprenol N-acetylglucosamine transferase.